Here is a 419-residue protein sequence, read N- to C-terminus: UDP-N-acetylglucosamine 1-carboxyvinyltransferase (419 aa).

22 to 23 (KN) contacts phosphoenolpyruvate. Position 93 (Arg93) interacts with UDP-N-acetyl-alpha-D-glucosamine. Cys117 functions as the Proton donor in the catalytic mechanism. Cys117 is modified (2-(S-cysteinyl)pyruvic acid O-phosphothioketal). UDP-N-acetyl-alpha-D-glucosamine contacts are provided by Asp307 and Ile329.

It belongs to the EPSP synthase family. MurA subfamily.

The protein localises to the cytoplasm. It carries out the reaction phosphoenolpyruvate + UDP-N-acetyl-alpha-D-glucosamine = UDP-N-acetyl-3-O-(1-carboxyvinyl)-alpha-D-glucosamine + phosphate. It participates in cell wall biogenesis; peptidoglycan biosynthesis. In terms of biological role, cell wall formation. Adds enolpyruvyl to UDP-N-acetylglucosamine. This Shewanella denitrificans (strain OS217 / ATCC BAA-1090 / DSM 15013) protein is UDP-N-acetylglucosamine 1-carboxyvinyltransferase.